A 409-amino-acid polypeptide reads, in one-letter code: Pentatricopeptide repeat-containing protein At1g01970 (409 aa).

6 PPR repeats span residues 164–198, 199–233, 234–268, 269–303, 304–338, and 339–373; these read NARD…GFLI, DQVT…GEPL, DYRS…EICA, GREV…GITP, DVKL…GIKA, and TDKC…SIML.

It belongs to the PPR family. P subfamily.

The chain is Pentatricopeptide repeat-containing protein At1g01970 from Arabidopsis thaliana (Mouse-ear cress).